Reading from the N-terminus, the 580-residue chain is Double-stranded RNA-binding protein Staufen homolog 1 (580 aa).

The residue at position 2 (serine 2) is an N-acetylserine. Polar residues predominate over residues 34–44 (SIPSTTSSLPS). Residues 34–59 (SIPSTTSSLPSENAGRPIQNSALPSA) are disordered. The region spanning 72 to 162 (TPTVELNALC…AAKALRTLQS (91 aa)) is the DRBM 1 domain. The residue at position 108 (arginine 108) is an Asymmetric dimethylarginine. Residue arginine 115 is modified to Asymmetric dimethylarginine; alternate. Residue arginine 115 is modified to Omega-N-methylarginine; alternate. The tract at residues 158-189 (RTLQSEPLPERPEGRRPGEQVNGRESEEENLN) is disordered. Positions 165–182 (LPERPEGRRPGEQVNGRE) are enriched in basic and acidic residues. Phosphoserine is present on serine 183. The DRBM 2 domain occupies 191-258 (SEISQVFEIA…AIAVLEELKK (68 aa)). Serine 285 carries the phosphoserine modification. One can recognise a DRBM 3 domain in the interval 293–361 (NPISRLAQIQ…AENMLEILGF (69 aa)). Positions 367–404 (QPTKPALKSEEKTPIKKPGDGRKVTFFEPGSGDENGTS) are disordered. Residues 373-391 (LKSEEKTPIKKPGDGRKVT) show a composition bias toward basic and acidic residues. Position 397 is a phosphoserine (serine 397).

Binds tubulin. Binds with low affinity single-stranded RNA or DNA homopolymers. Interacts with CASC3 in an RNA-dependent manner. Identified in a mRNP complex, at least composed of DHX9, DDX3X, ELAVL1, HNRNPU, IGF2BP1, ILF3, PABPC1, PCBP2, PTBP2, STAU1, STAU2, SYNCRIP and YBX1. Interacts with the influenza virus nonstructural protein NS1.

Its subcellular location is the cytoplasm. The protein localises to the rough endoplasmic reticulum. Binds double-stranded RNA (regardless of the sequence) and tubulin. May play a role in specific positioning of mRNAs at given sites in the cell by cross-linking cytoskeletal and RNA components, and in stimulating their translation at the site. The sequence is that of Double-stranded RNA-binding protein Staufen homolog 1 (STAU1) from Ailuropoda melanoleuca (Giant panda).